The sequence spans 294 residues: 4-hydroxy-tetrahydrodipicolinate synthase (294 aa).

Thr49 contributes to the pyruvate binding site. Catalysis depends on Tyr136, which acts as the Proton donor/acceptor. The active-site Schiff-base intermediate with substrate is Lys164. Residue Ile207 participates in pyruvate binding.

Belongs to the DapA family. As to quaternary structure, homotetramer; dimer of dimers.

Its subcellular location is the cytoplasm. The enzyme catalyses L-aspartate 4-semialdehyde + pyruvate = (2S,4S)-4-hydroxy-2,3,4,5-tetrahydrodipicolinate + H2O + H(+). It participates in amino-acid biosynthesis; L-lysine biosynthesis via DAP pathway; (S)-tetrahydrodipicolinate from L-aspartate: step 3/4. Its function is as follows. Catalyzes the condensation of (S)-aspartate-beta-semialdehyde [(S)-ASA] and pyruvate to 4-hydroxy-tetrahydrodipicolinate (HTPA). The protein is 4-hydroxy-tetrahydrodipicolinate synthase of Natronomonas pharaonis (strain ATCC 35678 / DSM 2160 / CIP 103997 / JCM 8858 / NBRC 14720 / NCIMB 2260 / Gabara) (Halobacterium pharaonis).